Here is a 637-residue protein sequence, read N- to C-terminus: MLNITLPDGSVRQYESPVTVAQIAASIGAGLAKATVAGRVNGKLVDACDPIVEDSAVQIITPKDQEGIEIIRHSCAHLVGHAVKQLYPNAKMVIGPVIEEGFYYDIATEKPFTPEDVAAIEARMKELIAQDYDVVKIMTPRAEAIKIFQERGEEYKLRLIDDMPEVEAMGMYHHQEYVDMCRGPHVPNTRFLKNFKLTKLAGAYWRGDSNNEMLQRIYGTAWATKDELKAYIQRIEEAEKRDHRKLGKQLDLFHLQDEAPGMVFWHPKGWALWQVIEQHMRKELNAAGYKEVKTPQIMDKTFWEKSGHWDNYKDNMFVTSSEKREYAVKPMNCPGHVQIFNNGLRSYRDLPMRLAEFGSCHRNEPSGALHGLMRVRGFVQDDAHIFCTEDQIVSEARAFNELLIRIYKQFGFHDVSVKLSLRPEKRAGSDDVWDKAEQGLREALTACGVEWGELPGEGAFYGPKIEYHVRDALGRSWQCGTLQLDFVLPERLNAEYVTENNDRARPVMLHRAILGSLERFIGILIENHAGSFPLWLAPVQLVIMNITENQADYCREVAAKLQAAGFRAELDLRNEKIGYKIRDNSQYRFPYQIVVGDKEKQENKVAVRRKAEDLGSLDLDDFIAQLQQEITDALVNH.

Positions 1-61 (MLNITLPDGS…VEDSAVQIIT (61 aa)) constitute a TGS domain. The segment at 242-533 (DHRKLGKQLD…LIENHAGSFP (292 aa)) is catalytic. 3 residues coordinate Zn(2+): Cys-333, His-384, and His-510.

The protein belongs to the class-II aminoacyl-tRNA synthetase family. In terms of assembly, homodimer. Zn(2+) serves as cofactor.

It is found in the cytoplasm. The enzyme catalyses tRNA(Thr) + L-threonine + ATP = L-threonyl-tRNA(Thr) + AMP + diphosphate + H(+). Catalyzes the attachment of threonine to tRNA(Thr) in a two-step reaction: L-threonine is first activated by ATP to form Thr-AMP and then transferred to the acceptor end of tRNA(Thr). Also edits incorrectly charged L-seryl-tRNA(Thr). The chain is Threonine--tRNA ligase from Neisseria meningitidis serogroup B (strain ATCC BAA-335 / MC58).